Consider the following 310-residue polypeptide: Glutaminase 1 (310 aa).

Residues Ser-66, Asn-117, Glu-161, Asn-168, Tyr-192, Tyr-244, and Val-262 each contribute to the substrate site. Lys-294 bears the N6-acetyllysine mark.

Belongs to the glutaminase family. Homotetramer.

It catalyses the reaction L-glutamine + H2O = L-glutamate + NH4(+). This is Glutaminase 1 from Shigella flexneri.